A 614-amino-acid chain; its full sequence is Protein B602L (614 aa).

Tandem repeats lie at residues 161–164 (CAST), 165–168 (NADT), 169–172 (SAST), 173–176 (NADT), 177–180 (SAST), 181–184 (NASI), 185–188 (NADT), 189–192 (NVDT), 193–196 (CAST), 197–200 (NAST), 201–204 (NVDT), 205–208 (NASI), 209–212 (NAST), 213–216 (NAST), 217–220 (NVDT), 221–224 (NAST), 225–228 (NASI), 229–232 (NADT), 233–236 (NVDT), 237–240 (CAST), 241–244 (NAST), 245–248 (NVDT), 249–252 (NASI), 253–256 (NAST), 257–260 (NAST), 261–264 (NVDT), 265–268 (NADI), 269–272 (NANT), 273–276 (NADI), 277–280 (NANI), and 281–284 (NANT). The interval 161–284 (CASTNADTSA…DINANINANT (124 aa)) is 28 X 4 AA tandem repeats of [CNS]-[AV]-[DNS]-[IT].

This sequence belongs to the asfivirus B602L family.

It is found in the host cytoplasm. In terms of biological role, plays an essential role in the assembly of the icosahedral capsid of the virus. Allows the assembly of 3 molecules of hexon protein p72 and formation of a thermostable trimer. The chain is Protein B602L from African swine fever virus (isolate Tick/Malawi/Lil 20-1/1983) (ASFV).